The sequence spans 247 residues: UDP-2,3-diacylglucosamine hydrolase (247 aa).

Positions 8, 10, 41, 79, and 114 each coordinate Mn(2+). 79–80 is a binding site for substrate; it reads NR. Residues D122, S160, D171, N174, and H202 each contribute to the substrate site. Mn(2+) contacts are provided by H202 and H204.

The protein belongs to the LpxH family. It depends on Mn(2+) as a cofactor.

It is found in the cell inner membrane. The catalysed reaction is UDP-2-N,3-O-bis[(3R)-3-hydroxytetradecanoyl]-alpha-D-glucosamine + H2O = 2-N,3-O-bis[(3R)-3-hydroxytetradecanoyl]-alpha-D-glucosaminyl 1-phosphate + UMP + 2 H(+). It participates in glycolipid biosynthesis; lipid IV(A) biosynthesis; lipid IV(A) from (3R)-3-hydroxytetradecanoyl-[acyl-carrier-protein] and UDP-N-acetyl-alpha-D-glucosamine: step 4/6. Its function is as follows. Hydrolyzes the pyrophosphate bond of UDP-2,3-diacylglucosamine to yield 2,3-diacylglucosamine 1-phosphate (lipid X) and UMP by catalyzing the attack of water at the alpha-P atom. Involved in the biosynthesis of lipid A, a phosphorylated glycolipid that anchors the lipopolysaccharide to the outer membrane of the cell. This chain is UDP-2,3-diacylglucosamine hydrolase, found in Xanthomonas oryzae pv. oryzae (strain MAFF 311018).